A 449-amino-acid chain; its full sequence is Flavonol 7-O-beta-glucosyltransferase UGT74F1 (449 aa).

H18 serves as the catalytic Proton acceptor. Residue H18 coordinates an anthocyanidin. The Charge relay role is filled by D111. T133, Q327, H342, W345, N346, S347, E350, D366, and Q367 together coordinate UDP-alpha-D-glucose.

It belongs to the UDP-glycosyltransferase family.

It carries out the reaction a 7-O-hydroxy-flavonol + UDP-alpha-D-glucose = a flavonol 7-O-beta-D-glucoside + UDP + H(+). Its function is as follows. Possesses quercetin 7-O-glucosyltransferase and 4'-O-glucosyltransferase activities in vitro. Also active in vitro on benzoates and benzoate derivatives. Has low affinity for the tryptophan precursor anthranilate. Catalyzes the formation of anthranilate glucose ester. Is a minor source of this activity in the plant. The sequence is that of Flavonol 7-O-beta-glucosyltransferase UGT74F1 from Arabidopsis thaliana (Mouse-ear cress).